Consider the following 273-residue polypeptide: tRNA (guanine-N(7)-)-methyltransferase (273 aa).

Residues methionine 1 to valine 32 are disordered. S-adenosyl-L-methionine is bound by residues glycine 88, glutamate 111–isoleucine 112, asparagine 150–cysteine 151, and cysteine 170. Residue aspartate 173 is part of the active site. S-adenosyl-L-methionine is bound at residue threonine 248 to glutamate 250.

It belongs to the class I-like SAM-binding methyltransferase superfamily. TrmB family. As to quaternary structure, forms a complex with trm82.

Its subcellular location is the nucleus. It carries out the reaction guanosine(46) in tRNA + S-adenosyl-L-methionine = N(7)-methylguanosine(46) in tRNA + S-adenosyl-L-homocysteine. It functions in the pathway tRNA modification; N(7)-methylguanine-tRNA biosynthesis. Its function is as follows. Catalyzes the formation of N(7)-methylguanine at position 46 (m7G46) in tRNA. This Schizosaccharomyces pombe (strain 972 / ATCC 24843) (Fission yeast) protein is tRNA (guanine-N(7)-)-methyltransferase (trm8).